The following is an 83-amino-acid chain: Three-finger toxin W-IV (83 aa).

The signal sequence occupies residues 1–21 (MKTLLLTLVVVTIVCLDLGHT). 4 disulfide bridges follow: Cys-24/Cys-45, Cys-38/Cys-62, Cys-64/Cys-75, and Cys-76/Cys-81.

Belongs to the three-finger toxin family. Short-chain subfamily. Type I alpha-neurotoxin sub-subfamily. In terms of tissue distribution, expressed by the venom gland.

The protein resides in the secreted. In terms of biological role, binds to muscle nicotinic acetylcholine receptor (nAChR) and inhibit acetylcholine from binding to the receptor, thereby impairing neuromuscular transmission. In Walterinnesia aegyptia (Desert black snake), this protein is Three-finger toxin W-IV.